A 160-amino-acid chain; its full sequence is Nucleotide-binding protein VF_1240 (160 aa).

The protein belongs to the YajQ family.

Its function is as follows. Nucleotide-binding protein. The polypeptide is Nucleotide-binding protein VF_1240 (Aliivibrio fischeri (strain ATCC 700601 / ES114) (Vibrio fischeri)).